Here is a 372-residue protein sequence, read N- to C-terminus: Putative glutamate--cysteine ligase 2 (372 aa).

Belongs to the glutamate--cysteine ligase type 2 family. YbdK subfamily. As to quaternary structure, homodimer.

It catalyses the reaction L-cysteine + L-glutamate + ATP = gamma-L-glutamyl-L-cysteine + ADP + phosphate + H(+). Functionally, ATP-dependent carboxylate-amine ligase which exhibits weak glutamate--cysteine ligase activity. The sequence is that of Putative glutamate--cysteine ligase 2 (ybdK) from Escherichia coli O157:H7.